The sequence spans 187 residues: PsbQ-like protein 3, chloroplastic (187 aa).

The transit peptide at Met1–Ile32 directs the protein to the chloroplast. Residues Asp33–Arg60 constitute a thylakoid transit peptide.

This sequence belongs to the PsbQ family. As to quaternary structure, subunit of the lumenal protuberance of the NDH complex.

The protein resides in the plastid. The protein localises to the chloroplast thylakoid membrane. Functionally, required for both formation and activity of the chloroplast NAD(P)H dehydrogenase (NDH) complex. This Arabidopsis thaliana (Mouse-ear cress) protein is PsbQ-like protein 3, chloroplastic (PQL3).